An 801-amino-acid chain; its full sequence is Phenylalanine--tRNA ligase beta subunit (801 aa).

The 114-residue stretch at 39 to 152 (ARAFSGVVVG…TDAPIGTDIR (114 aa)) folds into the tRNA-binding domain. Positions 407-482 (PARAPITLPI…RIYGYDNIPS (76 aa)) constitute a B5 domain. The Mg(2+) site is built by aspartate 460, aspartate 466, glutamate 469, and glutamate 470. The 94-residue stretch at 706–799 (SKFPQVRRDI…LTVEHSAQLR (94 aa)) folds into the FDX-ACB domain.

This sequence belongs to the phenylalanyl-tRNA synthetase beta subunit family. Type 1 subfamily. As to quaternary structure, tetramer of two alpha and two beta subunits. Mg(2+) is required as a cofactor.

The protein localises to the cytoplasm. It catalyses the reaction tRNA(Phe) + L-phenylalanine + ATP = L-phenylalanyl-tRNA(Phe) + AMP + diphosphate + H(+). This Psychrobacter arcticus (strain DSM 17307 / VKM B-2377 / 273-4) protein is Phenylalanine--tRNA ligase beta subunit.